The primary structure comprises 242 residues: Uridylate kinase (242 aa).

An ATP-binding site is contributed by 16–19; it reads KISG. The involved in allosteric activation by GTP stretch occupies residues 24–29; the sequence is GDQGFG. Glycine 58 contacts UMP. ATP contacts are provided by glycine 59 and arginine 63. UMP contacts are provided by residues aspartate 78 and 139 to 146; that span reads TGNPYFTT. ATP-binding residues include threonine 166, tyrosine 172, and aspartate 175.

The protein belongs to the UMP kinase family. As to quaternary structure, homohexamer.

It is found in the cytoplasm. It carries out the reaction UMP + ATP = UDP + ADP. The protein operates within pyrimidine metabolism; CTP biosynthesis via de novo pathway; UDP from UMP (UMPK route): step 1/1. With respect to regulation, allosterically activated by GTP. Inhibited by UTP. Its function is as follows. Catalyzes the reversible phosphorylation of UMP to UDP. This Roseobacter denitrificans (strain ATCC 33942 / OCh 114) (Erythrobacter sp. (strain OCh 114)) protein is Uridylate kinase.